The chain runs to 489 residues: Ribonuclease G (489 aa).

Residues 39–128 (GNIYKGRVSR…LTTDITLPSR (90 aa)) form the S1 motif domain. Residues Asp304 and Asp347 each contribute to the Mg(2+) site.

Belongs to the RNase E/G family. RNase G subfamily. In terms of assembly, homodimer, and possible higher multimers. Requires Mg(2+) as cofactor.

The protein localises to the cytoplasm. Its function is as follows. Acts in the processing of the 5'-end of precursors of 16S rRNA. Confers adaptive resistance to aminoglycoside antibiotics through modulation of 16S rRNA processing. An endoribonuclease, it prefers 5'-monophosphorylated substrates and cleaves single-stranded sites rich in A and U residues; also contributes to 23S rRNA processing, tRNA processing and mRNA turnover. Involved in decay of speF mRNA, has a preference for adenine nucleotides. The polypeptide is Ribonuclease G (Salmonella typhimurium (strain SL1344)).